We begin with the raw amino-acid sequence, 400 residues long: Integumentary mucin A.1 (400 aa).

The signal sequence occupies residues 1-20; sequence MKHIILCIHFLLMVVGLGQA. 2 consecutive P-type domains span residues 21–64 and 72–115; these read QDCS…FYNA and LECS…YART. 3 disulfide bridges follow: Cys23/Cys49, Cys33/Cys48, and Cys43/Cys60. A glycan (N-linked (GlcNAc...) asparagine) is linked at Asn63. Intrachain disulfides connect Cys74-Cys100, Cys84-Cys99, and Cys94-Cys111. Low complexity-rich tracts occupy residues 122–264 and 272–299; these read PDTT…DTTP and ETTT…ETTT. Residues 122 to 302 form a disordered region; that stretch reads PDTTTASTTA…TTTETTTAPP (181 aa). Tandem repeats lie at residues 127–135, 136–144, 145–153, 154–162, 163–171, 172–180, 181–189, 190–198, 199–207, 208–216, 217–225, 226–234, 235–243, and 244–252. The segment at 127-261 is 15 X 9 AA approximate tandem repeats of [AV]-[SP]-T-T-[AP]-E-T-T-T; sequence ASTTAETTTV…TEPTTTPTTD (135 aa). The stretch at 253-261 is one 1-15; approximate repeat; sequence EPTTTPTTD. 7 tandem repeats follow at residues 272–275, 276–279, 280–283, 284–287, 288–291, 292–295, and 296–299. The segment at 272–299 is 7 X 4 AA repeats of E-T-T-T; the sequence is ETTTETTTETTTETTTETTTETTTETTT. 2 consecutive P-type domains span residues 298-343 and 351-394; these read TTAP…FYTE and AECT…FEKA. Cystine bridges form between Cys312-Cys327, Cys322-Cys339, Cys353-Cys379, Cys363-Cys378, and Cys373-Cys390.

Extensively O-glycosylated. Consist of about 70% carbohydrate and 30% protein. As to expression, expressed and stored exclusively in mature mucous glands of the skin.

The protein resides in the secreted. Its function is as follows. Could be involved in defense against microbial infections. Protects the epithelia from external environment. This Xenopus laevis (African clawed frog) protein is Integumentary mucin A.1.